We begin with the raw amino-acid sequence, 195 residues long: AP-4-A phosphorylase (195 aa).

The segment covering 1-17 (MSDEDRTDRATEDHTIF) has biased composition (basic and acidic residues). Residues 1 to 20 (MSDEDRTDRATEDHTIFDRG) are disordered. The 110-residue stretch at 57 to 166 (PFTEIPQLSD…VPRWGGDANF (110 aa)) folds into the HIT domain. The Histidine triad motif motif lies at 151-155 (HLHVH). Residue H153 is the Tele-AMP-histidine intermediate of the active site.

In terms of assembly, homotetramer. The cofactor is a divalent metal cation.

The enzyme catalyses ADP + ATP + H(+) = P(1),P(4)-bis(5'-adenosyl) tetraphosphate + phosphate. In terms of biological role, catabolizes diadenosine 5',5'''-P1,P4-tetraphosphate (Ap4A) into ADP and ATP. The polypeptide is AP-4-A phosphorylase (Mycobacterium tuberculosis (strain CDC 1551 / Oshkosh)).